Consider the following 310-residue polypeptide: Cytochrome f (310 aa).

An N-terminal signal peptide occupies residues 1-27 (MRRHLSLFLGSLVIGLALLIAPAASWA). Heme-binding residues include tyrosine 28, cysteine 48, cysteine 51, and histidine 52. Residues 277–297 (IYGLLAFFAAVALAQIMLVLK) traverse the membrane as a helical segment.

Belongs to the cytochrome f family. As to quaternary structure, the 4 large subunits of the cytochrome b6-f complex are cytochrome b6, subunit IV (17 kDa polypeptide, PetD), cytochrome f and the Rieske protein, while the 4 small subunits are PetG, PetL, PetM and PetN. The complex functions as a dimer. The cofactor is heme.

It is found in the cellular thylakoid membrane. Functionally, component of the cytochrome b6-f complex, which mediates electron transfer between photosystem II (PSII) and photosystem I (PSI), cyclic electron flow around PSI, and state transitions. In Synechococcus sp. (strain CC9605), this protein is Cytochrome f.